Reading from the N-terminus, the 721-residue chain is Cytosolic carboxypeptidase 2 (721 aa).

Positions 43–71 (TASDMINSSSPSESSDSNLEEEQEESKPC) are disordered. The segment covering 50–59 (SSSPSESSDS) has biased composition (low complexity). A Peptidase M14 domain is found at 334–605 (YPYTYSKLQH…CFCDTLLDFC (272 aa)). 3 residues coordinate Zn(2+): histidine 400, glutamate 403, and histidine 496. The Proton donor/acceptor role is filled by glutamate 569. The disordered stretch occupies residues 645-721 (DIESSTSGSN…TQHGDTEDQS (77 aa)). Positions 647 to 660 (ESSTSGSNSTESDG) are enriched in low complexity. A compositionally biased stretch (basic residues) spans 672-688 (GKKKLLRSRKERNRLRQ). The span at 703–714 (YSCQTLNATTQH) shows a compositional bias: polar residues.

Belongs to the peptidase M14 family. Zn(2+) is required as a cofactor.

Its subcellular location is the cytoplasm. It localises to the cytosol. The protein localises to the cytoskeleton. The protein resides in the microtubule organizing center. It is found in the centrosome. Its subcellular location is the centriole. It localises to the cilium basal body. The enzyme catalyses (L-glutamyl)(n+1)-gamma-L-glutamyl-L-glutamyl-[protein] + H2O = (L-glutamyl)(n)-gamma-L-glutamyl-L-glutamyl-[protein] + L-glutamate. Metallocarboxypeptidase that mediates deglutamylation of target proteins. Catalyzes the deglutamylation of polyglutamate side chains generated by post-translational polyglutamylation in proteins such as tubulins. Also removes gene-encoded polyglutamates from the carboxy-terminus of target proteins such as MYLK. Does not show detyrosinase or deglycylase activities from the carboxy-terminus of tubulin. In terms of biological role, metallocarboxypeptidase that mediates deglutamylation of tubulin and non-tubulin target proteins. Catalyzes the removal of polyglutamate side chains present on the gamma-carboxyl group of glutamate residues within the C-terminal tail of tubulin protein. Specifically cleaves tubulin long-side-chains, while it is not able to remove the branching point glutamate. Also catalyzes the removal of polyglutamate residues from the carboxy-terminus of non-tubulin proteins. The sequence is that of Cytosolic carboxypeptidase 2 (zte25) from Danio rerio (Zebrafish).